Here is a 122-residue protein sequence, read N- to C-terminus: Ribosome-binding factor A (122 aa).

The protein belongs to the RbfA family. In terms of assembly, monomer. Binds 30S ribosomal subunits, but not 50S ribosomal subunits or 70S ribosomes.

The protein localises to the cytoplasm. Functionally, one of several proteins that assist in the late maturation steps of the functional core of the 30S ribosomal subunit. Associates with free 30S ribosomal subunits (but not with 30S subunits that are part of 70S ribosomes or polysomes). Required for efficient processing of 16S rRNA. May interact with the 5'-terminal helix region of 16S rRNA. This chain is Ribosome-binding factor A, found in Moorella thermoacetica (strain ATCC 39073 / JCM 9320).